Consider the following 384-residue polypeptide: Lipid-A-disaccharide synthase 1 (384 aa).

This sequence belongs to the LpxB family.

The catalysed reaction is a lipid X + a UDP-2-N,3-O-bis[(3R)-3-hydroxyacyl]-alpha-D-glucosamine = a lipid A disaccharide + UDP + H(+). It participates in bacterial outer membrane biogenesis; LPS lipid A biosynthesis. Condensation of UDP-2,3-diacylglucosamine and 2,3-diacylglucosamine-1-phosphate to form lipid A disaccharide, a precursor of lipid A, a phosphorylated glycolipid that anchors the lipopolysaccharide to the outer membrane of the cell. The chain is Lipid-A-disaccharide synthase 1 from Legionella pneumophila subsp. pneumophila (strain Philadelphia 1 / ATCC 33152 / DSM 7513).